The sequence spans 235 residues: MTKAQNVDPSEIKKFEEMASRWWDLEGEFKPLHQINPLRLNYVLEKADGVFGKKVLDVGCGGGILAESMAKEGAVVTGLDMGKEPLEVARLHALEAGTKLTYIQSTIEDHAAENAGTYDVVTCMEMLEHVPDPLSVIRSCAALVKPSGHVFFSTLNRNMKSYLFAIVGAEKLLRIVPEGTHDHEKFIKPAEMMKMIDQTDLTEMGITGLHYNPLNDSYKLGRNVDVNYIVHTTKY.

Positions 39, 59, 80, and 124 each coordinate S-adenosyl-L-methionine.

It belongs to the methyltransferase superfamily. UbiG/COQ3 family.

The catalysed reaction is a 3-demethylubiquinol + S-adenosyl-L-methionine = a ubiquinol + S-adenosyl-L-homocysteine + H(+). It catalyses the reaction a 3-(all-trans-polyprenyl)benzene-1,2-diol + S-adenosyl-L-methionine = a 2-methoxy-6-(all-trans-polyprenyl)phenol + S-adenosyl-L-homocysteine + H(+). The protein operates within cofactor biosynthesis; ubiquinone biosynthesis. In terms of biological role, O-methyltransferase that catalyzes the 2 O-methylation steps in the ubiquinone biosynthetic pathway. This is Ubiquinone biosynthesis O-methyltransferase from Vibrio campbellii (strain ATCC BAA-1116).